The following is a 38-amino-acid chain: Large ribosomal subunit protein bL36 (38 aa).

Belongs to the bacterial ribosomal protein bL36 family.

This Prosthecochloris aestuarii (strain DSM 271 / SK 413) protein is Large ribosomal subunit protein bL36.